The primary structure comprises 336 residues: Torsin-1B (336 aa).

Positions 1-24 (MRRIGAFGGSTALWALLAAHVAGA) are cleaved as a signal peptide. A glycan (N-linked (GlcNAc...) asparagine) is linked at Asn64. Position 109–116 (109–116 (GWAGTGKN)) interacts with ATP. Asn165 carries an N-linked (GlcNAc...) asparagine glycan.

It belongs to the ClpA/ClpB family. Torsin subfamily. In terms of assembly, homohexamer. Interacts with TOR1A; the interaction may be specific of neural tissues. Interacts with TOR1AIP1; TOR1AIP1 is required for TOR1B location on the nuclear membrane. Interacts (ATP-bound) with TOR1AIP2; important for endoplasmic reticulum integrity. In terms of processing, N-glycosylated. Highly expressed in liver and muscle; lower expression levels are observed in brain (at protein level).

The protein resides in the endoplasmic reticulum lumen. The protein localises to the nucleus membrane. It carries out the reaction ATP + H2O = ADP + phosphate + H(+). In terms of biological role, may serve as a molecular chaperone assisting in the proper folding of secreted and/or membrane proteins. Plays a role in non-neural cells nuclear envelope and endoplasmic reticulum integrity. May have a redundant function with TOR1A in non-neural tissues. This Mus musculus (Mouse) protein is Torsin-1B (Tor1b).